The primary structure comprises 318 residues: D-alanine--D-alanine ligase (318 aa).

Positions 116-311 constitute an ATP-grasp domain; that stretch reads KQVWQSLGIP…FQQLVLAILA (196 aa). Residue 142–197 participates in ATP binding; sequence SAELGFPLIVKPAHEGSSIGMAKVNSEQELVAAWKDAAKYDSQVLVEQWIHGPEFT. Positions 265, 278, and 280 each coordinate Mg(2+).

This sequence belongs to the D-alanine--D-alanine ligase family. It depends on Mg(2+) as a cofactor. Mn(2+) is required as a cofactor.

It localises to the cytoplasm. The enzyme catalyses 2 D-alanine + ATP = D-alanyl-D-alanine + ADP + phosphate + H(+). It participates in cell wall biogenesis; peptidoglycan biosynthesis. Functionally, cell wall formation. This chain is D-alanine--D-alanine ligase, found in Pseudomonas entomophila (strain L48).